The following is a 303-amino-acid chain: Quinolinate synthase (303 aa).

The iminosuccinate site is built by H25 and S42. Residue C87 participates in [4Fe-4S] cluster binding. Iminosuccinate is bound by residues 113–115 (YVN) and S130. C174 provides a ligand contact to [4Fe-4S] cluster. Iminosuccinate contacts are provided by residues 200-202 (HPE) and T217. [4Fe-4S] cluster is bound at residue C260.

The protein belongs to the quinolinate synthase family. Type 2 subfamily. In terms of assembly, homodimer. Requires [4Fe-4S] cluster as cofactor.

The protein resides in the cytoplasm. The catalysed reaction is iminosuccinate + dihydroxyacetone phosphate = quinolinate + phosphate + 2 H2O + H(+). It participates in cofactor biosynthesis; NAD(+) biosynthesis; quinolinate from iminoaspartate: step 1/1. In terms of biological role, catalyzes the condensation of iminoaspartate with dihydroxyacetone phosphate to form quinolinate. The protein is Quinolinate synthase of Pyrococcus furiosus (strain ATCC 43587 / DSM 3638 / JCM 8422 / Vc1).